Reading from the N-terminus, the 209-residue chain is Homeobox protein ceh-2 (209 aa).

The span at 1-14 (MTLKFSVERLVDSE) shows a compositional bias: basic and acidic residues. 2 disordered regions span residues 1 to 46 (MTLK…KSGK) and 181 to 209 (HKRV…KSVS). Residues 15–24 (KESEEADVEE) show a composition bias toward acidic residues. Positions 126–185 (NKRIRTAFSASQLIQLEKAFEGNHYVVGNERKQLAAKLSLTETQVKVWFQNRRTKHKRVR) form a DNA-binding region, homeobox.

It belongs to the EMX homeobox family. As to expression, in the anterior pharynx, expressed in the I3 interneuron, the NSM and M3 motor neuron pairs, the three m2 muscle cells and the three e2 epithelial cells (at protein level).

The protein resides in the nucleus. Required for activity of the M3 pharyngeal motor neuron. The chain is Homeobox protein ceh-2 from Caenorhabditis elegans.